The following is a 145-amino-acid chain: Synaptojanin-2-binding protein (145 aa).

At 1-117 (MNGRVDYLVT…GHRGEGDPSG (117 aa)) the chain is on the cytoplasmic side. Residues 13–100 (EINLTRGPSG…AVSLRVQHRL (88 aa)) enclose the PDZ domain. The helical transmembrane segment at 118-138 (IPIFMVLVPVFALTMVAAWAF) threads the bilayer. The Mitochondrial intermembrane segment spans residues 139 to 145 (MRYRQQL).

In terms of assembly, binds (via the PDZ domain) to isoform 2A of SYNJ2 (via the unique motif in the C-terminus). Interacts (via C-terminus) with RALBP1. Interacts (via PDZ domain) with ACVR2A (via C-terminus) and ACVR2B (via C-terminus). Forms a ternary complex with ACVR2A and RALBP1. Interacts with MAPK12. Interacts with DLL1; enhances DLL1 protein stability, and promotes notch signaling in endothelial cells.

Its subcellular location is the mitochondrion outer membrane. Its function is as follows. Regulates endocytosis of activin type 2 receptor kinases through the Ral/RALBP1-dependent pathway and may be involved in suppression of activin-induced signal transduction. This is Synaptojanin-2-binding protein (SYNJ2BP) from Homo sapiens (Human).